Reading from the N-terminus, the 800-residue chain is Blood-group-substance endo-1,4-beta-galactosidase (800 aa).

The signal sequence occupies residues 1–35 (MGGVTMKNNLKKYIKYILSVILVFFVGVNGMEVYA).

This sequence belongs to the glycosyl hydrolase 98 family.

The protein resides in the secreted. The enzyme catalyses Endohydrolysis of (1-&gt;4)-beta-D-galactosidic linkages in blood group A and B substances.. Its function is as follows. Endo-beta-galactosidase capable of releasing both the blood group A trisaccharide (A-Tri; GalNAcalpha1--&gt;3(Fucalpha1--&gt;2)Gal) and B trisaccharide (B-Tri; Galalpha1--&gt;3(Fucalpha1--&gt;2)Gal) glycotopes from blood group A- and B-containing glycoconjugates, respectively. This Clostridium perfringens protein is Blood-group-substance endo-1,4-beta-galactosidase (eabC).